Reading from the N-terminus, the 78-residue chain is Large ribosomal subunit protein uL24 (78 aa).

The protein belongs to the universal ribosomal protein uL24 family. Part of the 50S ribosomal subunit.

Functionally, one of two assembly initiator proteins, it binds directly to the 5'-end of the 23S rRNA, where it nucleates assembly of the 50S subunit. In terms of biological role, one of the proteins that surrounds the polypeptide exit tunnel on the outside of the subunit. In Campylobacter curvus (strain 525.92), this protein is Large ribosomal subunit protein uL24.